Reading from the N-terminus, the 334-residue chain is Ketol-acid reductoisomerase (NADP(+)) (334 aa).

Residues 1 to 181 (MTTVYYDQDV…GATRAGVIET (181 aa)) enclose the KARI N-terminal Rossmann domain. Residues 25 to 28 (YGSQ), arginine 48, serine 52, and 82 to 85 (DEIQ) each bind NADP(+). Histidine 107 is a catalytic residue. NADP(+) is bound at residue glycine 133. Residues 182 to 327 (TFKEETETDL…RELREMMPFI (146 aa)) form the KARI C-terminal knotted domain. Mg(2+) contacts are provided by aspartate 190, glutamate 194, glutamate 226, and glutamate 230. Serine 251 contributes to the substrate binding site.

Belongs to the ketol-acid reductoisomerase family. Mg(2+) is required as a cofactor.

The catalysed reaction is (2R)-2,3-dihydroxy-3-methylbutanoate + NADP(+) = (2S)-2-acetolactate + NADPH + H(+). It carries out the reaction (2R,3R)-2,3-dihydroxy-3-methylpentanoate + NADP(+) = (S)-2-ethyl-2-hydroxy-3-oxobutanoate + NADPH + H(+). It functions in the pathway amino-acid biosynthesis; L-isoleucine biosynthesis; L-isoleucine from 2-oxobutanoate: step 2/4. Its pathway is amino-acid biosynthesis; L-valine biosynthesis; L-valine from pyruvate: step 2/4. Functionally, involved in the biosynthesis of branched-chain amino acids (BCAA). Catalyzes an alkyl-migration followed by a ketol-acid reduction of (S)-2-acetolactate (S2AL) to yield (R)-2,3-dihydroxy-isovalerate. In the isomerase reaction, S2AL is rearranged via a Mg-dependent methyl migration to produce 3-hydroxy-3-methyl-2-ketobutyrate (HMKB). In the reductase reaction, this 2-ketoacid undergoes a metal-dependent reduction by NADPH to yield (R)-2,3-dihydroxy-isovalerate. The sequence is that of Ketol-acid reductoisomerase (NADP(+)) from Staphylococcus aureus (strain MSSA476).